Consider the following 52-residue polypeptide: DNA import protein CedA2 (52 aa).

2 consecutive transmembrane segments (helical) span residues 1–21 (MKSYLLVSMLLLLNSILVYIY) and 27–47 (ILVSGITVAVIIYIVVKIIFE).

As to quaternary structure, forms a complex composed of CedA, CedA1 and CedA2.

It is found in the cell membrane. Its function is as follows. Part of the Ced system, which is involved in DNA import. The polypeptide is DNA import protein CedA2 (Sulfolobus acidocaldarius (strain ATCC 33909 / DSM 639 / JCM 8929 / NBRC 15157 / NCIMB 11770)).